We begin with the raw amino-acid sequence, 134 residues long: Profilin-3 (134 aa).

C13 and C118 form a disulfide bridge. Residues 84–100 (AVIRGKKGSGGITSKKT) carry the Involved in PIP2 interaction motif. T114 carries the post-translational modification Phosphothreonine.

This sequence belongs to the profilin family. As to quaternary structure, occurs in many kinds of cells as a complex with monomeric actin in a 1:1 ratio. Post-translationally, phosphorylated by MAP kinases.

It localises to the cytoplasm. Its subcellular location is the cytoskeleton. Binds to actin and affects the structure of the cytoskeleton. At high concentrations, profilin prevents the polymerization of actin, whereas it enhances it at low concentrations. This is Profilin-3 from Olea europaea (Common olive).